A 231-amino-acid chain; its full sequence is ATP phosphoribosyltransferase (231 aa).

This sequence belongs to the ATP phosphoribosyltransferase family. Short subfamily. In terms of assembly, heteromultimer composed of HisG and HisZ subunits.

The protein resides in the cytoplasm. It catalyses the reaction 1-(5-phospho-beta-D-ribosyl)-ATP + diphosphate = 5-phospho-alpha-D-ribose 1-diphosphate + ATP. It participates in amino-acid biosynthesis; L-histidine biosynthesis; L-histidine from 5-phospho-alpha-D-ribose 1-diphosphate: step 1/9. In terms of biological role, catalyzes the condensation of ATP and 5-phosphoribose 1-diphosphate to form N'-(5'-phosphoribosyl)-ATP (PR-ATP). Has a crucial role in the pathway because the rate of histidine biosynthesis seems to be controlled primarily by regulation of HisG enzymatic activity. The chain is ATP phosphoribosyltransferase from Brucella suis (strain ATCC 23445 / NCTC 10510).